Reading from the N-terminus, the 130-residue chain is S-adenosylmethionine decarboxylase proenzyme (130 aa).

S63 (schiff-base intermediate with substrate; via pyruvic acid) is an active-site residue. Position 63 is a pyruvic acid (Ser); by autocatalysis (S63). H68 serves as the catalytic Proton acceptor; for processing activity. Catalysis depends on C83, which acts as the Proton donor; for catalytic activity.

This sequence belongs to the prokaryotic AdoMetDC family. Type 1 subfamily. Heterotetramer of two alpha and two beta chains arranged as a dimer of alpha/beta heterodimers. Pyruvate serves as cofactor. Is synthesized initially as an inactive proenzyme. Formation of the active enzyme involves a self-maturation process in which the active site pyruvoyl group is generated from an internal serine residue via an autocatalytic post-translational modification. Two non-identical subunits are generated from the proenzyme in this reaction, and the pyruvate is formed at the N-terminus of the alpha chain, which is derived from the carboxyl end of the proenzyme. The post-translation cleavage follows an unusual pathway, termed non-hydrolytic serinolysis, in which the side chain hydroxyl group of the serine supplies its oxygen atom to form the C-terminus of the beta chain, while the remainder of the serine residue undergoes an oxidative deamination to produce ammonia and the pyruvoyl group blocking the N-terminus of the alpha chain.

The enzyme catalyses S-adenosyl-L-methionine + H(+) = S-adenosyl 3-(methylsulfanyl)propylamine + CO2. Its pathway is amine and polyamine biosynthesis; S-adenosylmethioninamine biosynthesis; S-adenosylmethioninamine from S-adenosyl-L-methionine: step 1/1. In terms of biological role, catalyzes the decarboxylation of S-adenosylmethionine to S-adenosylmethioninamine (dcAdoMet), the propylamine donor required for the synthesis of the polyamines spermine and spermidine from the diamine putrescine. The polypeptide is S-adenosylmethionine decarboxylase proenzyme (Thermosipho africanus (strain TCF52B)).